Here is a 629-residue protein sequence, read N- to C-terminus: (-)-alpha pinene synthase 1, chloroplastic (629 aa).

Residues 1-48 constitute a chloroplast transit peptide; the sequence is MSPVSVISLPSDLCLPTSFIDRSGRELNPLHITIPNVAMRRQGKLMTR. Positions 380, 384, and 532 each coordinate Mg(2+). The short motif at 380-384 is the DDXXD motif element; it reads DDMYD.

Belongs to the terpene synthase family. Tpsd subfamily. It depends on Mg(2+) as a cofactor. Requires Mn(2+) as cofactor.

It is found in the plastid. The protein resides in the chloroplast. It carries out the reaction (2E)-geranyl diphosphate = (1S,5S)-alpha-pinene + diphosphate. The enzyme catalyses (2E)-geranyl diphosphate = (1S,5S)-beta-pinene + diphosphate. Its pathway is terpene metabolism; oleoresin biosynthesis. It functions in the pathway secondary metabolite biosynthesis; terpenoid biosynthesis. Functionally, monoterpene synthase (TPS) involved in the biosynthesis of monoterpene natural products included in conifer oleoresin secretions and volatile emissions; these compounds contribute to biotic and abiotic stress defense against herbivores and pathogens. Catalyzes the conversion of (2E)-geranyl diphosphate (GPP) to (-)-alpha-pinene and, to a lower extent, to (-)-beta-pinene. This is (-)-alpha pinene synthase 1, chloroplastic from Pinus contorta (Shore pine).